A 358-amino-acid chain; its full sequence is MTARLRPELADIPAYTPGKTVPGAIKIASNETVHGPLPSVRAAIEKATDQLNRYPDNGYLELREHLASHLDKNLGAGAFTPEQIAVGCGSVSLCQQLIQITSSVGDEVIFAWRSFEIYPLQVRTAGATPVQVPLRDHTHDLDAMLAAITDRTRLIFVCNPNNPTSTVVDPAALKRFVEAVPPHILVVIDEAYVEYIRGDQVPGSFGLVRAHPNVVVLRTFSKAYGLAGLRIGYAVADADIVTALGKVYVPFSATSISQAAAIASIDAADELLARTDQVVAERDRVTAALREAGFTLPPSQSNFVWLPLAERTLDFVRRAAENRLVVRPYGEDGVRVTIAAPHENDAFLEFARNWIGQP.

Lys-222 carries the N6-(pyridoxal phosphate)lysine modification.

Belongs to the class-II pyridoxal-phosphate-dependent aminotransferase family. Homodimer. Requires pyridoxal 5'-phosphate as cofactor.

The catalysed reaction is an aromatic L-alpha-amino acid + 2-oxoglutarate = an aromatic oxo-acid + L-glutamate. Functionally, aminotransferase that catalyzes the conversion of aromatic amino acids and 2-oxoglutarate into corresponding aromatic oxo acids and L-glutamate. This chain is Aromatic amino acid aminotransferase, found in Mycobacterium sp. (strain JLS).